The chain runs to 156 residues: Small ribosomal subunit protein uS7 (156 aa).

This sequence belongs to the universal ribosomal protein uS7 family. In terms of assembly, part of the 30S ribosomal subunit. Contacts proteins S9 and S11.

One of the primary rRNA binding proteins, it binds directly to 16S rRNA where it nucleates assembly of the head domain of the 30S subunit. Is located at the subunit interface close to the decoding center, probably blocks exit of the E-site tRNA. The protein is Small ribosomal subunit protein uS7 of Kineococcus radiotolerans (strain ATCC BAA-149 / DSM 14245 / SRS30216).